The following is a 367-amino-acid chain: Protein pxr1 (367 aa).

Disordered regions lie at residues 1–28 (MGLS…TDSF) and 156–336 (KALK…PMGI). Residues 15–27 (DPNNTKWSGNTDS) are compositionally biased toward polar residues. The region spanning 25–79 (TDSFGHRMMKSQGWTPGEYLGAKDAAHAEFHTAANASHIRVVIKDNNLGLGAKIG) is the G-patch domain. Acidic residues predominate over residues 167–182 (SSDDSDSSSDEEEEEK). Composition is skewed to basic residues over residues 209 to 221 (SKKS…SKKR), 236 to 248 (KSKK…KSKS), and 265 to 277 (KARK…KKRR). Low complexity predominate over residues 282–296 (ATAGADTEETSSTSK). Positions 297 to 309 (SSKKNSKKDKHKS) are enriched in basic residues. Residues 310–328 (SSASESSTKESTPTVTESS) show a composition bias toward low complexity.

It belongs to the PINX1 family.

It is found in the nucleus. The protein localises to the nucleolus. Functionally, involved in rRNA-processing at A0, A1 and A2 sites and negatively regulates telomerase. The sequence is that of Protein pxr1 (pxr1) from Sclerotinia sclerotiorum (strain ATCC 18683 / 1980 / Ss-1) (White mold).